Consider the following 157-residue polypeptide: 6,7-dimethyl-8-ribityllumazine synthase (157 aa).

5-amino-6-(D-ribitylamino)uracil contacts are provided by residues Phe-24, 58-60 (SFE), and 82-84 (AVI). Residue 87–88 (ET) participates in (2S)-2-hydroxy-3-oxobutyl phosphate binding. His-90 serves as the catalytic Proton donor. Phe-115 is a binding site for 5-amino-6-(D-ribitylamino)uracil. Arg-129 contributes to the (2S)-2-hydroxy-3-oxobutyl phosphate binding site.

Belongs to the DMRL synthase family.

The catalysed reaction is (2S)-2-hydroxy-3-oxobutyl phosphate + 5-amino-6-(D-ribitylamino)uracil = 6,7-dimethyl-8-(1-D-ribityl)lumazine + phosphate + 2 H2O + H(+). Its pathway is cofactor biosynthesis; riboflavin biosynthesis; riboflavin from 2-hydroxy-3-oxobutyl phosphate and 5-amino-6-(D-ribitylamino)uracil: step 1/2. Functionally, catalyzes the formation of 6,7-dimethyl-8-ribityllumazine by condensation of 5-amino-6-(D-ribitylamino)uracil with 3,4-dihydroxy-2-butanone 4-phosphate. This is the penultimate step in the biosynthesis of riboflavin. In Thermus thermophilus (strain ATCC BAA-163 / DSM 7039 / HB27), this protein is 6,7-dimethyl-8-ribityllumazine synthase.